Consider the following 292-residue polypeptide: Elongation factor Ts (292 aa).

An involved in Mg(2+) ion dislocation from EF-Tu region spans residues 80 to 83 (TDSV).

Belongs to the EF-Ts family.

It localises to the cytoplasm. Its function is as follows. Associates with the EF-Tu.GDP complex and induces the exchange of GDP to GTP. It remains bound to the aminoacyl-tRNA.EF-Tu.GTP complex up to the GTP hydrolysis stage on the ribosome. This chain is Elongation factor Ts, found in Lactiplantibacillus plantarum (strain ATCC BAA-793 / NCIMB 8826 / WCFS1) (Lactobacillus plantarum).